The primary structure comprises 473 residues: Bifunctional protein HldE (473 aa).

Positions 1–318 (MKLSMPRFDQ…RAVQREEGSE (318 aa)) are ribokinase. An ATP-binding site is contributed by 194-197 (NLGE). The active site involves Asp263. Residues 343-473 (FTNGCFDILH…TAIVEKIRKA (131 aa)) are cytidylyltransferase.

It in the N-terminal section; belongs to the carbohydrate kinase PfkB family. The protein in the C-terminal section; belongs to the cytidylyltransferase family. Homodimer.

The enzyme catalyses D-glycero-beta-D-manno-heptose 7-phosphate + ATP = D-glycero-beta-D-manno-heptose 1,7-bisphosphate + ADP + H(+). It catalyses the reaction D-glycero-beta-D-manno-heptose 1-phosphate + ATP + H(+) = ADP-D-glycero-beta-D-manno-heptose + diphosphate. It functions in the pathway nucleotide-sugar biosynthesis; ADP-L-glycero-beta-D-manno-heptose biosynthesis; ADP-L-glycero-beta-D-manno-heptose from D-glycero-beta-D-manno-heptose 7-phosphate: step 1/4. It participates in nucleotide-sugar biosynthesis; ADP-L-glycero-beta-D-manno-heptose biosynthesis; ADP-L-glycero-beta-D-manno-heptose from D-glycero-beta-D-manno-heptose 7-phosphate: step 3/4. Its function is as follows. Catalyzes the phosphorylation of D-glycero-D-manno-heptose 7-phosphate at the C-1 position to selectively form D-glycero-beta-D-manno-heptose-1,7-bisphosphate. In terms of biological role, catalyzes the ADP transfer from ATP to D-glycero-beta-D-manno-heptose 1-phosphate, yielding ADP-D-glycero-beta-D-manno-heptose. The polypeptide is Bifunctional protein HldE (Stutzerimonas stutzeri (strain A1501) (Pseudomonas stutzeri)).